The following is a 665-amino-acid chain: Cysteine-rich receptor-like protein kinase 26 (665 aa).

The N-terminal stretch at 1 to 22 is a signal peptide; the sequence is MLSLLLPLISLLFQIQCFTVKS. Topologically, residues 23–283 are extracellular; the sequence is QPVPLNQICS…GDKNRGVPKA (261 aa). 2 Gnk2-homologous domains span residues 26-129 and 135-244; these read PLNQ…NRTI and ISPH…PWRF. Residues Asn33, Asn37, Asn67, Asn126, Asn146, and Asn266 are each glycosylated (N-linked (GlcNAc...) asparagine). The interval 251-275 is disordered; sequence DDPSSVPATPSRPPKNETRSVTQGD. Residues 284-304 traverse the membrane as a helical segment; the sequence is LIFASASVAIVVLFIVLLVVF. Over 305–665 the chain is Cytoplasmic; it reads LKLRRKENIR…YNSNTELYPR (361 aa). The Protein kinase domain maps to 344 to 624; it reads FSLENKLGEG…VLMLDGHTIA (281 aa). ATP is bound by residues 350-358 and Lys372; that span reads LGEGGFGAV. Tyr417 carries the post-translational modification Phosphotyrosine. The active-site Proton acceptor is the Asp469. Phosphoserine is present on Ser473. Thr510 carries the post-translational modification Phosphothreonine. Phosphotyrosine is present on Tyr518. Positions 641 to 665 are disordered; it reads SDSSSSLGHNAKTSNYNSNTELYPR. Residues 647-665 show a composition bias toward polar residues; it reads LGHNAKTSNYNSNTELYPR.

The protein belongs to the protein kinase superfamily. Ser/Thr protein kinase family. CRK subfamily.

Its subcellular location is the membrane. It carries out the reaction L-seryl-[protein] + ATP = O-phospho-L-seryl-[protein] + ADP + H(+). It catalyses the reaction L-threonyl-[protein] + ATP = O-phospho-L-threonyl-[protein] + ADP + H(+). This Arabidopsis thaliana (Mouse-ear cress) protein is Cysteine-rich receptor-like protein kinase 26 (CRK26).